A 92-amino-acid chain; its full sequence is Small ribosomal subunit protein bS18 (92 aa).

This sequence belongs to the bacterial ribosomal protein bS18 family. As to quaternary structure, part of the 30S ribosomal subunit. Forms a tight heterodimer with protein bS6.

Its function is as follows. Binds as a heterodimer with protein bS6 to the central domain of the 16S rRNA, where it helps stabilize the platform of the 30S subunit. The protein is Small ribosomal subunit protein bS18 of Cupriavidus taiwanensis (strain DSM 17343 / BCRC 17206 / CCUG 44338 / CIP 107171 / LMG 19424 / R1) (Ralstonia taiwanensis (strain LMG 19424)).